The following is a 325-amino-acid chain: Diadenosine 5',5'''-P1,P4-tetraphosphate phosphorylase 2 (325 aa).

Residues Lys53, 92 to 93, Asn148, and 154 to 157 each bind substrate; these read NK and GSSQ. The active-site Nucleophile is the His161. Substrate-binding positions include Gln163, 277-279, Met284, and Lys288; that span reads NST.

It belongs to the ATP adenylyltransferase family. Monomer. A divalent metal cation serves as cofactor.

The protein localises to the cytoplasm. It localises to the nucleus. The enzyme catalyses ADP + ATP + H(+) = P(1),P(4)-bis(5'-adenosyl) tetraphosphate + phosphate. It catalyses the reaction sulfate + ADP + H(+) = adenosine 5'-phosphosulfate + phosphate. Functionally, ap4A phosphorylase catalyzes the phosphorolytic degradation of bis(5'-adenosyl) tetraphosphate (Ap4A) into ADP and ATP. Can also use other Np4N' nucleotides (where N and N' stand for A,C,G or U) as substrates, but prefers A-containing substrates. Cannot catalyze the reverse reaction. Additionally, this enzyme can also catalyze the phosphorolytic degradation of adenosine 5'-phosphosulfate (AMPS) into ADP and sulfate, the reversible exchange reaction between inorganic phosphate and the beta-phosphate of a nucleoside diphosphate (NDP), and the synthesis of Ap4A from AMPS plus ATP. This is Diadenosine 5',5'''-P1,P4-tetraphosphate phosphorylase 2 from Saccharomyces cerevisiae (strain ATCC 204508 / S288c) (Baker's yeast).